Here is a 266-residue protein sequence, read N- to C-terminus: 5'-nucleotidase SurE (266 aa).

Residues D8, D9, S39, and N93 each coordinate a divalent metal cation.

It belongs to the SurE nucleotidase family. It depends on a divalent metal cation as a cofactor.

The protein resides in the cytoplasm. The enzyme catalyses a ribonucleoside 5'-phosphate + H2O = a ribonucleoside + phosphate. Functionally, nucleotidase that shows phosphatase activity on nucleoside 5'-monophosphates. In Thermococcus gammatolerans (strain DSM 15229 / JCM 11827 / EJ3), this protein is 5'-nucleotidase SurE.